The primary structure comprises 614 residues: Zinc finger protein 276 (614 aa).

Residues Met1 to Ala50 are disordered. The 87-residue stretch at Gly77–Gly163 folds into the ZAD domain. Zn(2+) is bound by residues Cys79, Cys82, Cys136, and Cys139. The segment at Ala268–Lys420 is disordered. Positions Ser357–Glu369 are enriched in acidic residues. Residues Tyr386–Arg408 are compositionally biased toward basic and acidic residues. The segment covering Ile409–Lys420 has biased composition (basic residues). 5 consecutive C2H2-type zinc fingers follow at residues Tyr434–His458, Arg465–His490, Tyr496–His518, Leu524–His546, and Phe554–His577. The segment at Gln583–Thr614 is disordered. Residues Ala591–Pro600 show a composition bias toward pro residues.

It localises to the nucleus. It is found in the chromosome. Its subcellular location is the centromere. The protein localises to the kinetochore. Its function is as follows. May be involved in transcriptional regulation. In Homo sapiens (Human), this protein is Zinc finger protein 276 (ZNF276).